The sequence spans 392 residues: MSDSATTDSAGTGGERSASAPGDGTRAVRAGLPEPVKHEPTLPGPVFAAHFHLPGDPTGPYTYGRDENPTWTRLESAIGELEAPGEAGVETLVFASGMAAISSVLFSQLRAGDTAVLPDDGYQALPLVRAQLEAYGIEVRTAPTGRDAQLDVLDGAKLLWIETPSNPGLDVCDVRRLVEAAHAGGALVAVDNTLATPLGQRPLELGADFSVASGTKQLTGHGDVLLGYVAGRDAGAMAAVRRWRKIVGAIPGPMEAWLAHRSIATLQLRVDRQDSTALKVAEALRTRPEITGLRYPGLPDDPSHKVASQQMLRYGCVVSFTLPSRARADRFLDALRLVEGATSFGGVRSTAERRGRWGGDAVPEGFIRLSVGAEDPDDLVADLLRALDETTE.

A compositionally biased stretch (polar residues) spans Met-1–Ala-10. The tract at residues Met-1 to Thr-41 is disordered. The residue at position 216 (Lys-216) is an N6-(pyridoxal phosphate)lysine.

This sequence belongs to the trans-sulfuration enzymes family. Requires pyridoxal 5'-phosphate as cofactor.

Its subcellular location is the cytoplasm. The enzyme catalyses L,L-cystathionine + H2O = 2-oxobutanoate + L-cysteine + NH4(+). It functions in the pathway amino-acid biosynthesis; L-cysteine biosynthesis; L-cysteine from L-homocysteine and L-serine: step 2/2. The chain is Putative cystathionine gamma-lyase (cysA) from Streptomyces coelicolor (strain ATCC BAA-471 / A3(2) / M145).